The following is a 331-amino-acid chain: Methionyl-tRNA formyltransferase (331 aa).

Ser111 to Pro114 serves as a coordination point for (6S)-5,6,7,8-tetrahydrofolate.

Belongs to the Fmt family.

It catalyses the reaction L-methionyl-tRNA(fMet) + (6R)-10-formyltetrahydrofolate = N-formyl-L-methionyl-tRNA(fMet) + (6S)-5,6,7,8-tetrahydrofolate + H(+). Attaches a formyl group to the free amino group of methionyl-tRNA(fMet). The formyl group appears to play a dual role in the initiator identity of N-formylmethionyl-tRNA by promoting its recognition by IF2 and preventing the misappropriation of this tRNA by the elongation apparatus. The sequence is that of Methionyl-tRNA formyltransferase from Thermosynechococcus vestitus (strain NIES-2133 / IAM M-273 / BP-1).